The chain runs to 130 residues: Small ribosomal subunit protein uS9 (130 aa).

The protein belongs to the universal ribosomal protein uS9 family.

The chain is Small ribosomal subunit protein uS9 from Pectobacterium atrosepticum (strain SCRI 1043 / ATCC BAA-672) (Erwinia carotovora subsp. atroseptica).